The sequence spans 503 residues: Chromodomain Y-like protein 2 (503 aa).

The region spanning 7–67 (YEVERIVDKR…LHLSKDKRVK (61 aa)) is the Chromo domain. The tract at residues 66-177 (VKSGKQAGAS…GNGSHQPDLE (112 aa)) is disordered. Basic and acidic residues predominate over residues 88–98 (RLSHRPLEPGK). The segment covering 101 to 120 (PSSHKRKRVNSPLSRPKKGS) has biased composition (basic residues). Over residues 130-140 (KTVSYRTTPSG) the composition is skewed to polar residues.

Interacts (via chromo domain) with histone H3K9me3.

The protein localises to the nucleus. The sequence is that of Chromodomain Y-like protein 2 (Cdyl2) from Mus musculus (Mouse).